Here is a 476-residue protein sequence, read N- to C-terminus: Cardiolipin synthase (476 aa).

Helical transmembrane passes span 2 to 22 (HLFINMIFLINIVFIISIIFI) and 31 to 51 (WAWILILTFLPILGFIIYILF). 2 consecutive PLD phosphodiesterase domains span residues 207–234 (INYRNHRKILIIDSKVAFLGGFNIGDEY) and 389–416 (EKGFLHAKTIVADSSICSVGTANMDIRS). Residues H212, K214, D219, H394, K396, and D401 contribute to the active site.

It belongs to the phospholipase D family. Cardiolipin synthase subfamily.

The protein localises to the cell membrane. The catalysed reaction is 2 a 1,2-diacyl-sn-glycero-3-phospho-(1'-sn-glycerol) = a cardiolipin + glycerol. Catalyzes the reversible phosphatidyl group transfer from one phosphatidylglycerol molecule to another to form cardiolipin (CL) (diphosphatidylglycerol) and glycerol. The chain is Cardiolipin synthase (cls) from Clostridium perfringens (strain ATCC 13124 / DSM 756 / JCM 1290 / NCIMB 6125 / NCTC 8237 / Type A).